We begin with the raw amino-acid sequence, 322 residues long: uncharacterized protein (322 aa).

A coiled-coil region spans residues 205–286; sequence QEIKNAHAAL…LKKAISEAVQ (82 aa). Basic and acidic residues-rich tracts occupy residues 254 to 281 and 290 to 299; these read EKEE…KKAI and DRIEAIEKSR. Positions 254-322 are disordered; that stretch reads EKEEELNKKD…VQKSIWSGLF (69 aa). The span at 310-322 shows a compositional bias: polar residues; it reads SEQVQKSIWSGLF.

The protein to B.subtilis XkdF.

This is an uncharacterized protein from Bacillus subtilis (strain 168).